We begin with the raw amino-acid sequence, 69 residues long: DNA-directed RNA polymerase subunit epsilon (69 aa).

Belongs to the RNA polymerase subunit epsilon family. RNAP is composed of a core of 2 alpha, a beta and a beta' subunit. The core is associated with a delta subunit, and at least one of epsilon or omega. When a sigma factor is associated with the core the holoenzyme is formed, which can initiate transcription.

The enzyme catalyses RNA(n) + a ribonucleoside 5'-triphosphate = RNA(n+1) + diphosphate. Functionally, a non-essential component of RNA polymerase (RNAP). The sequence is that of DNA-directed RNA polymerase subunit epsilon from Bacillus velezensis (strain DSM 23117 / BGSC 10A6 / LMG 26770 / FZB42) (Bacillus amyloliquefaciens subsp. plantarum).